Here is a 469-residue protein sequence, read N- to C-terminus: Sulfate adenylyltransferase subunit 1 (469 aa).

One can recognise a tr-type G domain in the interval 22–238 (KQLLRFITCG…LETIKIDEDR (217 aa)). The interval 31-38 (GSVDDGKS) is G1. 31–38 (GSVDDGKS) lines the GTP pocket. The segment at 89-93 (GITID) is G2. Positions 110-113 (DTPG) are G3. Residues 110-114 (DTPGH) and 165-168 (NKMD) contribute to the GTP site. The segment at 165–168 (NKMD) is G4. A G5 region spans residues 203–205 (SAL).

This sequence belongs to the TRAFAC class translation factor GTPase superfamily. Classic translation factor GTPase family. CysN/NodQ subfamily. In terms of assembly, heterodimer composed of CysD, the smaller subunit, and CysN.

It catalyses the reaction sulfate + ATP + H(+) = adenosine 5'-phosphosulfate + diphosphate. The protein operates within sulfur metabolism; hydrogen sulfide biosynthesis; sulfite from sulfate: step 1/3. In terms of biological role, with CysD forms the ATP sulfurylase (ATPS) that catalyzes the adenylation of sulfate producing adenosine 5'-phosphosulfate (APS) and diphosphate, the first enzymatic step in sulfur assimilation pathway. APS synthesis involves the formation of a high-energy phosphoric-sulfuric acid anhydride bond driven by GTP hydrolysis by CysN coupled to ATP hydrolysis by CysD. The sequence is that of Sulfate adenylyltransferase subunit 1 from Aliarcobacter butzleri (strain RM4018) (Arcobacter butzleri).